We begin with the raw amino-acid sequence, 2027 residues long: Mediator of RNA polymerase II transcription subunit 12 (2027 aa).

Position 13 is a phosphotyrosine (Tyr13). Disordered regions lie at residues 170–191 (QSTSTLPTTPAPQPPTSSTPST), 474–516 (GAPG…MDID), 538–563 (MPCEGKGSPSPEKPDVEKEVKPPPKE), and 1088–1113 (TVTGGTEELPEEEGGGGSGGRRQGGR). 4 positions are modified to phosphoserine: Ser482, Ser512, Ser545, and Ser547. The span at 549-563 (EKPDVEKEVKPPPKE) shows a compositional bias: basic and acidic residues. 2 positions are modified to phosphoserine: Ser1105 and Ser1116. A compositionally biased stretch (low complexity) spans 1241-1258 (AETGSSSGSTASNMPSSS). Disordered stretches follow at residues 1241 to 1262 (AETGSSSGSTASNMPSSSKTKP), 1297 to 1321 (ELEKGQHLGSSSRKERDRQKQKSMS), and 1585 to 1676 (YLEP…PGSI). Basic and acidic residues-rich tracts occupy residues 1297–1316 (ELEKGQHLGSSSRKERDRQK) and 1605–1618 (EPEKKAPEPPKTDK). The tract at residues 1463-1901 (LAKKLQKELG…VRSTAILPEQ (439 aa)) is interaction with CTNNB1 and GLI3. Residues 1631 to 1640 (KKSTKGKKRS) show a composition bias toward basic residues. Lys1645 is modified (N6-acetyllysine). The residue at position 1746 (Arg1746) is an Asymmetric dimethylarginine; alternate. Omega-N-methylarginine; alternate is present on Arg1746. Arg1757 bears the Omega-N-methylarginine mark. The interval 1805 to 1848 (QHTGPAGTMVPPSYSSQPYQSTHPSTNPTLVDPTRHLQQRPSGY) is disordered. Residues 1815-1830 (PPSYSSQPYQSTHPST) are compositionally biased toward low complexity. Asymmetric dimethylarginine occurs at positions 1844 and 1865. Low complexity-rich tracts occupy residues 1965–1975 (QHQQQQQQQAA), 1983–1999 (SQPQFQRQGLQQTQQQQ), and 2008–2021 (LQQQLSNTQPQPST). Disordered regions lie at residues 1965–1999 (QHQQQQQQQAAPPQPQPQSQPQFQRQGLQQTQQQQ) and 2008–2027 (LQQQLSNTQPQPSTNIFGRY).

It belongs to the Mediator complex subunit 12 family. In terms of assembly, component of the Mediator complex, which is composed of MED1, MED4, MED6, MED7, MED8, MED9, MED10, MED11, MED12, MED13, MED13L, MED14, MED15, MED16, MED17, MED18, MED19, MED20, MED21, MED22, MED23, MED24, MED25, MED26, MED27, MED29, MED30, MED31, CCNC, CDK8 and CDC2L6/CDK11. The MED12, MED13, CCNC and CDK8 subunits form a distinct module termed the CDK8 module. Mediator containing the CDK8 module is less active than Mediator lacking this module in supporting transcriptional activation. Individual preparations of the Mediator complex lacking one or more distinct subunits have been variously termed ARC, CRSP, DRIP, PC2, SMCC and TRAP. Also interacts with CTNNB1 and GLI3.

The protein localises to the nucleus. Its function is as follows. Component of the Mediator complex, a coactivator involved in the regulated transcription of nearly all RNA polymerase II-dependent genes. Mediator functions as a bridge to convey information from gene-specific regulatory proteins to the basal RNA polymerase II transcription machinery. Mediator is recruited to promoters by direct interactions with regulatory proteins and serves as a scaffold for the assembly of a functional preinitiation complex with RNA polymerase II and the general transcription factors. This subunit may specifically regulate transcription of targets of the Wnt signaling pathway and SHH signaling pathway. The chain is Mediator of RNA polymerase II transcription subunit 12 (MED12) from Pan troglodytes (Chimpanzee).